The primary structure comprises 471 residues: 3-isopropylmalate dehydratase large subunit (471 aa).

Positions 347, 407, and 410 each coordinate [4Fe-4S] cluster.

Belongs to the aconitase/IPM isomerase family. LeuC type 1 subfamily. In terms of assembly, heterodimer of LeuC and LeuD. [4Fe-4S] cluster is required as a cofactor.

It carries out the reaction (2R,3S)-3-isopropylmalate = (2S)-2-isopropylmalate. It participates in amino-acid biosynthesis; L-leucine biosynthesis; L-leucine from 3-methyl-2-oxobutanoate: step 2/4. Functionally, catalyzes the isomerization between 2-isopropylmalate and 3-isopropylmalate, via the formation of 2-isopropylmaleate. In Prochlorococcus marinus (strain MIT 9211), this protein is 3-isopropylmalate dehydratase large subunit.